The sequence spans 61 residues: Small ribosomal subunit protein uS14B (61 aa).

Residues cysteine 24, cysteine 27, cysteine 40, and cysteine 43 each coordinate Zn(2+).

Belongs to the universal ribosomal protein uS14 family. Zinc-binding uS14 subfamily. In terms of assembly, part of the 30S ribosomal subunit. Contacts proteins S3 and S10. Requires Zn(2+) as cofactor.

In terms of biological role, binds 16S rRNA, required for the assembly of 30S particles and may also be responsible for determining the conformation of the 16S rRNA at the A site. The polypeptide is Small ribosomal subunit protein uS14B (Kineococcus radiotolerans (strain ATCC BAA-149 / DSM 14245 / SRS30216)).